A 101-amino-acid polypeptide reads, in one-letter code: Small ribosomal subunit protein uS14 (101 aa).

A disordered region spans residues 36-61 (ASAEDRRAARQKLQSLPRNSSPVRQR). Over residues 47-59 (KLQSLPRNSSPVR) the composition is skewed to polar residues.

The protein belongs to the universal ribosomal protein uS14 family. In terms of assembly, part of the 30S ribosomal subunit. Contacts proteins S3 and S10.

Binds 16S rRNA, required for the assembly of 30S particles and may also be responsible for determining the conformation of the 16S rRNA at the A site. The protein is Small ribosomal subunit protein uS14 of Methylobacillus flagellatus (strain ATCC 51484 / DSM 6875 / VKM B-1610 / KT).